Consider the following 1080-residue polypeptide: Origin recognition complex subunit 3 (1080 aa).

Disordered regions lie at residues 92–112 (YGIS…DDSS), 566–701 (TIKL…PKRI), and 869–902 (IKNE…ENEQ). Residues 651–661 (IKSDLECNDND) are compositionally biased toward basic and acidic residues. The segment covering 662-671 (KDNDDNDNDI) has biased composition (acidic residues). Composition is skewed to low complexity over residues 672 to 688 (NENN…NSNN) and 875 to 896 (QQQQ…QQQQ).

This sequence belongs to the ORC3 family. As to quaternary structure, ORC is composed of six subunits.

The protein localises to the nucleus. Component of the origin recognition complex (ORC) that binds origins of replication. DNA-binding is ATP-dependent, however specific DNA sequences that define origins of replication have not been identified so far. ORC is required to assemble the pre-replication complex necessary to initiate DNA replication. This is Origin recognition complex subunit 3 (orcC) from Dictyostelium discoideum (Social amoeba).